Reading from the N-terminus, the 337-residue chain is Nicotinate-nucleotide--dimethylbenzimidazole phosphoribosyltransferase (337 aa).

Glu-305 acts as the Proton acceptor in catalysis.

It belongs to the CobT family.

The enzyme catalyses 5,6-dimethylbenzimidazole + nicotinate beta-D-ribonucleotide = alpha-ribazole 5'-phosphate + nicotinate + H(+). The protein operates within nucleoside biosynthesis; alpha-ribazole biosynthesis; alpha-ribazole from 5,6-dimethylbenzimidazole: step 1/2. In terms of biological role, catalyzes the synthesis of alpha-ribazole-5'-phosphate from nicotinate mononucleotide (NAMN) and 5,6-dimethylbenzimidazole (DMB). The sequence is that of Nicotinate-nucleotide--dimethylbenzimidazole phosphoribosyltransferase from Roseobacter denitrificans (strain ATCC 33942 / OCh 114) (Erythrobacter sp. (strain OCh 114)).